The following is a 246-amino-acid chain: NLP effector protein Pc118548 (246 aa).

The first 19 residues, 1–19, serve as a signal peptide directing secretion; sequence MNFRAFLLAAIAGIATINA. The Hepta-peptide GHRHDWE motif signature appears at 122-128; the sequence is GHRHYWE. A glycan (N-linked (GlcNAc...) asparagine) is linked at Asn141.

This sequence belongs to the Necrosis inducing protein (NPP1) family.

The protein resides in the secreted. Its function is as follows. Secreted effector that contributes strongly to virulence during infection by P.capsici. Induces cell death in the Solanaceae, including Nicotiana benthamiana and hot pepper. The polypeptide is NLP effector protein Pc118548 (Phytophthora capsici).